The chain runs to 834 residues: Mannosyl-oligosaccharide glucosidase (834 aa).

Basic residues predominate over residues 1–10; it reads MARGERRRRA. Residues 1–36 are Cytoplasmic-facing; the sequence is MARGERRRRAAAAEGARPLERARGAGRRDGRAGGAR. Positions 1–37 are disordered; it reads MARGERRRRAAAAEGARPLERARGAGRRDGRAGGARG. The short motif at 3–9 is the Endoplasmic reticulum targeting element; sequence RGERRRR. Residues 17 to 31 show a composition bias toward basic and acidic residues; it reads RPLERARGAGRRDGR. A helical; Signal-anchor for type II membrane protein transmembrane segment spans residues 37 to 57; the sequence is GSAGGAALAVVVLALAFGLSG. Residues 58 to 834 are Lumenal-facing; the sequence is RWVLAWLGVR…LVLLIMAEEY (777 aa). Residues 74 to 136 are required for endoplasmic reticulum targeting; the sequence is PAPSALPPDS…GTPPKLRHTC (63 aa). The active-site Proton donor is the aspartate 580. N-linked (GlcNAc...) asparagine glycosylation occurs at asparagine 654. Glutamate 804 acts as the Proton acceptor in catalysis.

It belongs to the glycosyl hydrolase 63 family.

The protein localises to the endoplasmic reticulum membrane. The enzyme catalyses N(4)-(alpha-D-Glc-(1-&gt;2)-alpha-D-Glc-(1-&gt;3)-alpha-D-Glc-(1-&gt;3)-alpha-D-Man-(1-&gt;2)-alpha-D-Man-(1-&gt;2)-alpha-D-Man-(1-&gt;3)-[alpha-D-Man-(1-&gt;2)-alpha-D-Man-(1-&gt;3)-[alpha-D-Man-(1-&gt;2)-alpha-D-Man-(1-&gt;6)]-alpha-D-Man-(1-&gt;6)]-beta-D-Man-(1-&gt;4)-beta-D-GlcNAc-(1-&gt;4)-beta-D-GlcNAc)-L-asparaginyl-[protein] + H2O = N(4)-(alpha-D-Glc-(1-&gt;3)-alpha-D-Glc-(1-&gt;3)-alpha-D-Man-(1-&gt;2)-alpha-D-Man-(1-&gt;2)-alpha-D-Man-(1-&gt;3)-[alpha-D-Man-(1-&gt;2)-alpha-D-Man-(1-&gt;3)-[alpha-D-Man-(1-&gt;2)-alpha-D-Man-(1-&gt;6)]-alpha-D-Man-(1-&gt;6)]-beta-D-Man-(1-&gt;4)-beta-D-GlcNAc-(1-&gt;4)-beta-D-GlcNAc)-L-asparaginyl-[protein] + beta-D-glucose. Its pathway is glycan metabolism; N-glycan degradation. In terms of biological role, in the context of N-glycan degradation, cleaves the distal alpha 1,2-linked glucose residue from the Glc(3)Man(9)GlcNAc(2) oligosaccharide precursor in a highly specific manner. The chain is Mannosyl-oligosaccharide glucosidase from Rattus norvegicus (Rat).